We begin with the raw amino-acid sequence, 116 residues long: Nascent polypeptide-associated complex protein (116 aa).

The region spanning 6-70 (PKQMKDLERM…AREESKQQQK (65 aa)) is the NAC-A/B domain.

This sequence belongs to the NAC-alpha family. In terms of assembly, homodimer. Interacts with the ribosome. Binds ribosomal RNA.

In terms of biological role, contacts the emerging nascent chain on the ribosome. This chain is Nascent polypeptide-associated complex protein, found in Sulfolobus acidocaldarius (strain ATCC 33909 / DSM 639 / JCM 8929 / NBRC 15157 / NCIMB 11770).